We begin with the raw amino-acid sequence, 380 residues long: Cytochrome b (380 aa).

4 helical membrane-spanning segments follow: residues 34 to 54, 78 to 99, 114 to 134, and 179 to 199; these read FGSL…LLAM, WLIR…YLHI, WNTG…GYVL, and FFAL…VHLT. Heme b contacts are provided by histidine 84 and histidine 98. Heme b is bound by residues histidine 183 and histidine 197. An a ubiquinone-binding site is contributed by histidine 202. The next 4 helical transmembrane spans lie at 227 to 247, 289 to 309, 321 to 341, and 348 to 368; these read LKDI…ALFS, LGGV…PFLH, LSQL…WVGS, and FIII…ILFP.

It belongs to the cytochrome b family. As to quaternary structure, the cytochrome bc1 complex contains 11 subunits: 3 respiratory subunits (MT-CYB, CYC1 and UQCRFS1), 2 core proteins (UQCRC1 and UQCRC2) and 6 low-molecular weight proteins (UQCRH/QCR6, UQCRB/QCR7, UQCRQ/QCR8, UQCR10/QCR9, UQCR11/QCR10 and a cleavage product of UQCRFS1). This cytochrome bc1 complex then forms a dimer. It depends on heme b as a cofactor.

It localises to the mitochondrion inner membrane. Component of the ubiquinol-cytochrome c reductase complex (complex III or cytochrome b-c1 complex) that is part of the mitochondrial respiratory chain. The b-c1 complex mediates electron transfer from ubiquinol to cytochrome c. Contributes to the generation of a proton gradient across the mitochondrial membrane that is then used for ATP synthesis. The polypeptide is Cytochrome b (MT-CYB) (Procellaria parkinsoni (Black petrel)).